The primary structure comprises 149 residues: Transcriptional repressor NrdR (149 aa).

A zinc finger spans residues 3 to 34 (CPFCSENDTKVIDSRLVADGHQVRRRRQCLAC). Residues 49 to 139 (PKVIKSNGNR…VYRSFEDIRE (91 aa)) enclose the ATP-cone domain.

The protein belongs to the NrdR family. Requires Zn(2+) as cofactor.

Negatively regulates transcription of bacterial ribonucleotide reductase nrd genes and operons by binding to NrdR-boxes. The chain is Transcriptional repressor NrdR from Vibrio atlanticus (strain LGP32) (Vibrio splendidus (strain Mel32)).